Consider the following 218-residue polypeptide: Cytochrome P450 3A19 (218 aa).

Heme is bound at residue cysteine 153.

It belongs to the cytochrome P450 family. It depends on heme as a cofactor.

It is found in the endoplasmic reticulum membrane. Its subcellular location is the microsome membrane. It catalyses the reaction an organic molecule + reduced [NADPH--hemoprotein reductase] + O2 = an alcohol + oxidized [NADPH--hemoprotein reductase] + H2O + H(+). Cytochromes P450 are a group of heme-thiolate monooxygenases. In liver microsomes, this enzyme is involved in an NADPH-dependent electron transport pathway. It oxidizes a variety of structurally unrelated compounds, including steroids, fatty acids, and xenobiotics. The chain is Cytochrome P450 3A19 (CYP3A19) from Capra hircus aegagrus (Wild goat).